Reading from the N-terminus, the 480-residue chain is CASP8 and FADD-like apoptosis regulator (480 aa).

2 consecutive DED domains span residues 1-73 (MSAE…RILK) and 92-170 (DYRV…KIQK). The segment at 1-195 (MSAEVIHQVE…LQAAIQKSFK (195 aa)) is interaction with CASP8. Residues 1–227 (MSAEVIHQVE…GTQQEPVKKS (227 aa)) are interaction with FADD. The interaction with CASP8 propeptide stretch occupies residues 1-305 (MSAEVIHQVE…FACMPEHRDY (305 aa)). Positions 1–435 (MSAEVIHQVE…CLSQKLRQER (435 aa)) are not proteolytically processed and involved in apoptosis inhibition. The interaction with CASP3 stretch occupies residues 192–435 (KSFKDPSNNF…CLSQKLRQER (244 aa)). The interval 192 to 480 (KSFKDPSNNF…LRKKLIPSYT (289 aa)) is interaction with TRAF1 and TRAF2. Positions 217-480 (LGTQQEPVKK…LRKKLIPSYT (264 aa)) are interaction with CASP8 subunits p18 and p10. The segment at 263–358 (ETELLRDTFT…AGKPKIFFIQ (96 aa)) is caspase. Residues 370–480 (SSLLEVDGPA…LRKKLIPSYT (111 aa)) are interaction with CASP8.

The protein belongs to the peptidase C14A family. In terms of assembly, TNFRSF6 stimulation triggers recruitment to the death-inducing signaling complex (DISC) formed by TNFRSF6, FADD and CASP8. A proteolytic fragment (p43) stays associated with the DISC. Interacts with RIPK1. In terms of processing, proteolytically processed by CASP8 generating subunit p43 and p12.

Functionally, apoptosis regulator protein which may function as a crucial link between cell survival and cell death pathways in mammalian cells. Acts as an inhibitor of TNFRSF6 mediated apoptosis. A proteolytic fragment (p43) is likely retained in the death-inducing signaling complex (DISC) thereby blocking further recruitment and processing of caspase-8 at the complex. Full length and shorter isoforms have been shown either to induce apoptosis or to reduce TNFRSF-triggered apoptosis. Lacks enzymatic (caspase) activity. This is CASP8 and FADD-like apoptosis regulator (CFLAR) from Pongo abelii (Sumatran orangutan).